The sequence spans 919 residues: Glutamate receptor ionotropic, kainate 3 (919 aa).

An N-terminal signal peptide occupies residues 1 to 31 (MTAPWRRLRSLVWEYWAGFLVCAFWIPDSRG). Over 32–563 (MPHVIRIGGI…VFSFLNPLSP (532 aa)) the chain is Extracellular. N70, N76, N278, N381, N415, N426, and N433 each carry an N-linked (GlcNAc...) asparagine glycan. A disulfide bridge connects residues C99 and C350. 3 residues coordinate L-glutamate: P518, T520, and R525. N-linked (GlcNAc...) asparagine glycosylation is found at N548 and N551. A helical membrane pass occupies residues 564–584 (DIWMYVLLAYLGVSCVLFVIA). The Cytoplasmic portion of the chain corresponds to 585 to 636 (RFSPYEWYDAHPCNPGSEVVENNFTLLNSFWFGMGSLMQQGSELMPKALSTR). Residues 637–657 (IIGGIWWFFTLIIISSYTANL) form a helical membrane-spanning segment. At 658–820 (AAFLTVERME…KEASALGIQK (163 aa)) the chain is on the extracellular side. Residues A691, T692, and E739 each contribute to the L-glutamate site. A glycan (N-linked (GlcNAc...) asparagine) is linked at N752. A helical membrane pass occupies residues 821 to 841 (IGGIFIVLAAGLVLSVLVAVG). Over 842–919 (EFIYKLRKTA…CSTSLAPVFP (78 aa)) the chain is Cytoplasmic. Phosphoserine is present on S869. A Glycyl lysine isopeptide (Lys-Gly) (interchain with G-Cter in SUMO1) cross-link involves residue K887.

This sequence belongs to the glutamate-gated ion channel (TC 1.A.10.1) family. GRIK3 subfamily. As to quaternary structure, homotetramer, and heterotetramer with either GRIK4 or GRIK5. Can form functional heteromeric receptors with GRIK2. Interacts with PRKCABP. Interacts with NETO2. As to expression, detected in whole brain, cerebellum, brain cortex and hippocampus.

It localises to the cell membrane. The protein localises to the postsynaptic cell membrane. It catalyses the reaction Ca(2+)(in) = Ca(2+)(out). Glutamate-gated receptor activity inhibited by spermine. Ionotropic glutamate receptor that functions as a cation-permeable ligand-gated ion channel, gated by L-glutamate and the glutamatergic agonist kainic acid. Binding of the excitatory neurotransmitter L-glutamate induces a conformation change, leading to the opening of the cation channel, and thereby converts the chemical signal to an electrical impulse. The receptor then desensitizes rapidly and enters a transient inactive state, characterized by the presence of bound agonist. In association with GRIK2, involved in presynaptic facilitation of glutamate release at hippocampal mossy fiber synapses. In Mus musculus (Mouse), this protein is Glutamate receptor ionotropic, kainate 3 (Grik3).